A 417-amino-acid polypeptide reads, in one-letter code: Dihydrolipoyllysine-residue succinyltransferase component of 2-oxoglutarate dehydrogenase complex (417 aa).

Residues 1–76 form the Lipoyl-binding domain; that stretch reads MAEIKVPELA…QVGEIIGTIS (76 aa). K42 carries the post-translational modification N6-lipoyllysine. Residues 75–191 form a disordered region; sequence ISEGAGESSA…SFDKPVEVQK (117 aa). Basic and acidic residues-rich tracts occupy residues 89-103 and 152-163; these read EKTESKESVKEEKQA and RKQDVEAYEKPA. A Peripheral subunit-binding (PSBD) domain is found at 123–160; that stretch reads IASPSARKLAREKGIDLSQVPTGDPLGRVRKQDVEAYE. The span at 164-182 shows a compositional bias: low complexity; sequence SKPAPQQKQQPQAQKAQQS. Residues H388 and D392 contribute to the active site.

It belongs to the 2-oxoacid dehydrogenase family. As to quaternary structure, forms a 24-polypeptide structural core with octahedral symmetry. Part of the 2-oxoglutarate dehydrogenase (OGDH) complex composed of E1 (2-oxoglutarate dehydrogenase), E2 (dihydrolipoamide succinyltransferase) and E3 (dihydrolipoamide dehydrogenase); the complex contains multiple copies of the three enzymatic components (E1, E2 and E3). (R)-lipoate is required as a cofactor.

It carries out the reaction N(6)-[(R)-dihydrolipoyl]-L-lysyl-[protein] + succinyl-CoA = N(6)-[(R)-S(8)-succinyldihydrolipoyl]-L-lysyl-[protein] + CoA. It participates in amino-acid degradation; L-lysine degradation via saccharopine pathway; glutaryl-CoA from L-lysine: step 6/6. Functionally, E2 component of the 2-oxoglutarate dehydrogenase (OGDH) complex which catalyzes the second step in the conversion of 2-oxoglutarate to succinyl-CoA and CO(2). This chain is Dihydrolipoyllysine-residue succinyltransferase component of 2-oxoglutarate dehydrogenase complex (odhB), found in Bacillus subtilis (strain 168).